Reading from the N-terminus, the 585-residue chain is Arginine--tRNA ligase (585 aa).

The 'HIGH' region signature appears at 131 to 141 (ANPTGPMHVGH).

It belongs to the class-I aminoacyl-tRNA synthetase family. Monomer.

The protein resides in the cytoplasm. The enzyme catalyses tRNA(Arg) + L-arginine + ATP = L-arginyl-tRNA(Arg) + AMP + diphosphate. This chain is Arginine--tRNA ligase, found in Bartonella quintana (strain Toulouse) (Rochalimaea quintana).